A 100-amino-acid polypeptide reads, in one-letter code: Urease subunit gamma (100 aa).

This sequence belongs to the urease gamma subunit family. In terms of assembly, heterotrimer of UreA (gamma), UreB (beta) and UreC (alpha) subunits. Three heterotrimers associate to form the active enzyme.

The protein resides in the cytoplasm. The enzyme catalyses urea + 2 H2O + H(+) = hydrogencarbonate + 2 NH4(+). It participates in nitrogen metabolism; urea degradation; CO(2) and NH(3) from urea (urease route): step 1/1. The protein is Urease subunit gamma of Cupriavidus taiwanensis (strain DSM 17343 / BCRC 17206 / CCUG 44338 / CIP 107171 / LMG 19424 / R1) (Ralstonia taiwanensis (strain LMG 19424)).